The chain runs to 216 residues: Ras-like protein (216 aa).

16–23 (GGGGVGKS) lines the GTP pocket. Positions 38 to 46 (YDPTIEDSY) match the Effector region motif. Residues 63 to 67 (DTAGQ) and 122 to 125 (NKCD) contribute to the GTP site. 2 S-palmitoyl cysteine lipidation sites follow: Cys-209 and Cys-210. Cys-213 is subject to Cysteine methyl ester. A lipid anchor (S-geranylgeranyl cysteine) is attached at Cys-213. The propeptide at 214 to 216 (VVL) is removed in mature form.

Belongs to the small GTPase superfamily. Ras family.

It localises to the cell membrane. It carries out the reaction GTP + H2O = GDP + phosphate + H(+). With respect to regulation, alternates between an inactive form bound to GDP and an active form bound to GTP. Activated by a guanine nucleotide-exchange factor (GEF) and inactivated by a GTPase-activating protein (GAP). This is Ras-like protein (RAS1) from Cryptococcus neoformans var. neoformans serotype D (strain B-3501A) (Filobasidiella neoformans).